Consider the following 1396-residue polypeptide: DNA-directed RNA polymerase subunit beta' (1396 aa).

The Zn(2+) site is built by cysteine 73, cysteine 75, cysteine 88, and cysteine 91. Residues aspartate 467, aspartate 469, and aspartate 471 each coordinate Mg(2+). Residues cysteine 817, cysteine 891, cysteine 898, and cysteine 901 each contribute to the Zn(2+) site.

It belongs to the RNA polymerase beta' chain family. In terms of assembly, the RNAP catalytic core consists of 2 alpha, 1 beta, 1 beta' and 1 omega subunit. When a sigma factor is associated with the core the holoenzyme is formed, which can initiate transcription. Mg(2+) is required as a cofactor. Zn(2+) serves as cofactor.

It catalyses the reaction RNA(n) + a ribonucleoside 5'-triphosphate = RNA(n+1) + diphosphate. In terms of biological role, DNA-dependent RNA polymerase catalyzes the transcription of DNA into RNA using the four ribonucleoside triphosphates as substrates. The sequence is that of DNA-directed RNA polymerase subunit beta' from Orientia tsutsugamushi (strain Ikeda) (Rickettsia tsutsugamushi).